The chain runs to 295 residues: Probable peptidyl-prolyl cis-trans isomerase B (295 aa).

Disordered regions lie at residues 105 to 128 (SADKAAKPVKPPRAGKVPTDPATV) and 274 to 295 (IASGGDDGPPATEVTIESLRLD). The 169-residue stretch at 126–294 (ATVSASMATN…TEVTIESLRL (169 aa)) folds into the PPIase cyclophilin-type domain.

Belongs to the cyclophilin-type PPIase family.

The catalysed reaction is [protein]-peptidylproline (omega=180) = [protein]-peptidylproline (omega=0). Its function is as follows. PPIases accelerate the folding of proteins. It catalyzes the cis-trans isomerization of proline imidic peptide bonds in oligopeptides. This chain is Probable peptidyl-prolyl cis-trans isomerase B (ppiB), found in Mycobacterium leprae (strain TN).